The chain runs to 150 residues: Monothiol glutaredoxin-5, mitochondrial (150 aa).

The N-terminal 29 residues, 1–29 (MFLPKFNPIRSFSPILRAKTLLRYQNRMY), are a transit peptide targeting the mitochondrion. Residues 35–140 (RKAIEDAIES…DLLEEAQALV (106 aa)) form the Glutaredoxin domain. Residue Lys52 participates in glutathione binding. Position 60 (Cys60) interacts with [2Fe-2S] cluster. Residues 92 to 96 (REGIK), Ile104, and 117 to 118 (CD) contribute to the glutathione site.

The protein belongs to the glutaredoxin family. Monothiol subfamily. As to quaternary structure, homodimer. Interacts with SSQ1. Interacts with BOL1.

The protein resides in the mitochondrion matrix. Functionally, monothiol glutaredoxin involved in mitochondrial iron-sulfur (Fe/S) cluster transfer. Receives 2Fe/2S clusters from scaffold protein ISU1 and mediates their transfer to apoproteins, to the 4Fe/FS cluster biosynthesis machinery, or export from mitochondrion. The polypeptide is Monothiol glutaredoxin-5, mitochondrial (Saccharomyces cerevisiae (strain ATCC 204508 / S288c) (Baker's yeast)).